A 349-amino-acid chain; its full sequence is DNA polymerase IV (349 aa).

The UmuC domain occupies 7–188 (IIHIDMDYFF…LPVKKLFGVG (182 aa)). Asp-11 and Asp-106 together coordinate Mg(2+). The active site involves Glu-107.

Belongs to the DNA polymerase type-Y family. Monomer. Mg(2+) is required as a cofactor.

The protein localises to the cytoplasm. The enzyme catalyses DNA(n) + a 2'-deoxyribonucleoside 5'-triphosphate = DNA(n+1) + diphosphate. Its function is as follows. Poorly processive, error-prone DNA polymerase involved in untargeted mutagenesis. Copies undamaged DNA at stalled replication forks, which arise in vivo from mismatched or misaligned primer ends. These misaligned primers can be extended by PolIV. Exhibits no 3'-5' exonuclease (proofreading) activity. May be involved in translesional synthesis, in conjunction with the beta clamp from PolIII. The protein is DNA polymerase IV of Francisella tularensis subsp. holarctica (strain FTNF002-00 / FTA).